Consider the following 402-residue polypeptide: MSSVSQARSLGKYFLLIDNMLVVLGFFVVFPLISIRFVDSLGWAALMVGIALGLRQLVQQGLGIFGGAIADRLGARPMIVTGMLLRAAGFATMAVAHEPWVLWLSCVLSGLGGTLFDPPRSALVVKLVRPQERGRFFSLLMMQDSAGAVTGALIGSWLLQYDFRLVCGVGALLFVLCAGFNAWLLPDWKLSTVRTPLREGMGRVLRDRRFVTYVLTLTGYYMLAVQVMLMLPVMVNDIAGEPAAVKWMYAIEAVLSLTLLYPLARWSEKRFRLEQRLMAGLLVMTFSLVPIGLASNLQQLFTLICLFYIGSIIAEPARETLSASLADARARGSYMGFSRLGLAFGGALGYAGGGWLFDAGRALHTPELPWAMLGVIGVGTFLMLWWQFSQKRLAPGLLEQES.

A run of 11 helical transmembrane segments spans residues 13 to 33, 34 to 54, 99 to 116, 139 to 159, 165 to 185, 214 to 234, 243 to 263, 277 to 297, 300 to 320, 340 to 360, and 368 to 388; these read YFLL…FPLI, SIRF…ALGL, PWVL…GTLF, LLMM…SWLL, LVCG…AWLL, VLTL…LPVM, AAVK…LYPL, LMAG…ASNL, LFTL…ARET, LGLA…FDAG, and LPWA…WWQF.

Belongs to the major facilitator superfamily. DHA1 family. MdtH (TC 2.A.1.2.21) subfamily.

The protein localises to the cell inner membrane. The chain is Multidrug resistance protein MdtH from Cronobacter sakazakii (strain ATCC BAA-894) (Enterobacter sakazakii).